Here is a 209-residue protein sequence, read N- to C-terminus: Ion-translocating oxidoreductase complex subunit G (209 aa).

The helical transmembrane segment at 9-29 (GLVLAIFACASTGLVAVTHYL) threads the bilayer. Thr-175 carries the FMN phosphoryl threonine modification.

It belongs to the RnfG family. The complex is composed of six subunits: RnfA, RnfB, RnfC, RnfD, RnfE and RnfG. FMN serves as cofactor.

It localises to the cell inner membrane. Functionally, part of a membrane-bound complex that couples electron transfer with translocation of ions across the membrane. This is Ion-translocating oxidoreductase complex subunit G from Vibrio atlanticus (strain LGP32) (Vibrio splendidus (strain Mel32)).